Here is a 257-residue protein sequence, read N- to C-terminus: Zinc import ATP-binding protein ZnuC (257 aa).

An ABC transporter domain is found at 6-221 (VRLEQITVAF…AFVETFGHQV (216 aa)). Position 38–45 (38–45 (GPNGAGKT)) interacts with ATP.

This sequence belongs to the ABC transporter superfamily. Zinc importer (TC 3.A.1.15.5) family. In terms of assembly, the complex is composed of two ATP-binding proteins (ZnuC), two transmembrane proteins (ZnuB) and a solute-binding protein (ZnuA).

It localises to the cell inner membrane. The enzyme catalyses Zn(2+)(out) + ATP(in) + H2O(in) = Zn(2+)(in) + ADP(in) + phosphate(in) + H(+)(in). Its function is as follows. Part of the ABC transporter complex ZnuABC involved in zinc import. Responsible for energy coupling to the transport system. This is Zinc import ATP-binding protein ZnuC from Marinobacter nauticus (strain ATCC 700491 / DSM 11845 / VT8) (Marinobacter aquaeolei).